The sequence spans 200 residues: Imidazoleglycerol-phosphate dehydratase (200 aa).

Belongs to the imidazoleglycerol-phosphate dehydratase family.

Its subcellular location is the cytoplasm. It carries out the reaction D-erythro-1-(imidazol-4-yl)glycerol 3-phosphate = 3-(imidazol-4-yl)-2-oxopropyl phosphate + H2O. Its pathway is amino-acid biosynthesis; L-histidine biosynthesis; L-histidine from 5-phospho-alpha-D-ribose 1-diphosphate: step 6/9. In Chlorobium phaeovibrioides (strain DSM 265 / 1930) (Prosthecochloris vibrioformis (strain DSM 265)), this protein is Imidazoleglycerol-phosphate dehydratase.